Here is a 148-residue protein sequence, read N- to C-terminus: MLDRIDLKILRILNGNARKSFREIGRELGISEGTVRNRVKRLTEKGIITGFHASINPKNLGFEVVAILGLYIKPSKVEETLNKLKELDEIVELYQTTGEYDAVCIAILKDIESLGKFLAEKIYPLVNVNGCKVTLVLRTFKDGSKMPI.

One can recognise an HTH asnC-type domain in the interval 2 to 63 (LDRIDLKILR…SINPKNLGFE (62 aa)). The H-T-H motif DNA-binding region spans 21 to 40 (FREIGRELGISEGTVRNRVK).

In terms of assembly, homodimer.

Participates in positive as well as negative regulation of transcription. Binds to its own promoter. The sequence is that of HTH-type transcriptional regulator Ptr1 (ptr1) from Methanocaldococcus jannaschii (strain ATCC 43067 / DSM 2661 / JAL-1 / JCM 10045 / NBRC 100440) (Methanococcus jannaschii).